Reading from the N-terminus, the 1845-residue chain is Helicase swr-1 (1845 aa).

Over residues 1–13 (MTTMMTDSGTASD) the composition is skewed to polar residues. Positions 1–329 (MTTMMTDSGT…GASRATPRIK (329 aa)) are disordered. Positions 24 to 38 (NDTTTTTTTTTTPGD) are enriched in low complexity. Over residues 63–84 (SKSYSSTHHVPAIDNTSTTNAN) the composition is skewed to polar residues. Low complexity predominate over residues 98 to 108 (SPLSSISSPLS). The segment covering 168–180 (PKPESPPWKKFEA) has biased composition (basic and acidic residues). Residues 216–243 (AIQTSPVSNKSSASTSRKPAPASSSNSK) are compositionally biased toward polar residues. 2 stretches are compositionally biased toward pro residues: residues 248–258 (KMPPPPPPPKA) and 283–292 (PRRPATPPKP). The 76-residue stretch at 418 to 493 (PEAEEEPPRQ…EMEASKAKWR (76 aa)) folds into the HSA domain. Disordered regions lie at residues 539–713 (QKLQ…LFFG) and 749–935 (ELQV…TVKT). The span at 549 to 565 (DGDEITDEDEDEDDEDL) shows a compositional bias: acidic residues. Residues 574 to 585 (GDEKESDEHSDQ) are compositionally biased toward basic and acidic residues. 2 stretches are compositionally biased toward acidic residues: residues 586 to 608 (GSDEMSDENDEDEDEDNMSSSED) and 663 to 704 (NDDD…DDEP). Composition is skewed to polar residues over residues 762 to 777 (TNGTHTNEQLASSQTE) and 815 to 834 (TNDSSLKYPNEIVQSENQTL). Residues 888–897 (SQSQTQSPKT) are compositionally biased toward low complexity. The segment covering 898 to 909 (TDTKPTDVDTPH) has biased composition (basic and acidic residues). Polar residues predominate over residues 922–933 (RQSSPQPTTPTV). The region spanning 957–1122 (AGLYANNTNG…WSLLYFLAPP (166 aa)) is the Helicase ATP-binding domain. 970–977 (DEMGLGKT) lines the ATP pocket. The DEAH box signature appears at 1073–1076 (DEAH). The region spanning 1510–1660 (ALDKLLRKLQ…DVVIQEGEFT (151 aa)) is the Helicase C-terminal domain. 3 disordered regions span residues 1702–1724 (TTGAGGYDGTADGGGGASQPPVR), 1751–1783 (QDEADFGEAGSTRPGTPGDGLADLDGQLLGGEE), and 1816–1845 (LEGTPLELPRDRKKGRDRNRNRKGKDSRKR). Gly residues predominate over residues 1704–1718 (GAGGYDGTADGGGGA). Positions 1769–1781 (DGLADLDGQLLGG) are enriched in low complexity. The segment covering 1826–1845 (DRKKGRDRNRNRKGKDSRKR) has biased composition (basic residues).

The protein belongs to the SNF2/RAD54 helicase family. SWR1 subfamily. Component of the SWR1 chromatin-remodeling complex.

The protein resides in the nucleus. The enzyme catalyses ATP + H2O = ADP + phosphate + H(+). Functionally, catalytic component of the SWR1 complex which mediates the ATP-dependent exchange of histone H2A for the H2A variant H2A.Z leading to transcriptional regulation of selected genes by chromatin remodeling. In Neurospora crassa (strain ATCC 24698 / 74-OR23-1A / CBS 708.71 / DSM 1257 / FGSC 987), this protein is Helicase swr-1 (crf1-1).